A 461-amino-acid chain; its full sequence is MEQMEMDESRGGTGLRQYYLSKIEDLQLVVNDKSQNLRRLQAQRNELNAKVRLLREELQLLQEQGSYVGEVVRAMDKKKVLVKVHPEGKFVVDVDKNIDINDVTPNCRVALRNDSYTLHKILPNKVDPLVSLMMVEKVPDSTYEMIGGLDKQIKEIKEVIELPVKHPEHFEALGIAQPKGVLLYGPPGTGKTLLARAVAHHTDCTFIRVSGSELVQKFIGEGARMVRELFVMAREHAPSIIFMDEIDSIGSRLEGGSGGDSEVQRTMLELLNQLDGFEATKNIKVIMATNRIDILDSALLRPGRIDRKIEFPPPNEEARLDILKIHSRKMNLTRGINLRKIAELMPGASGAEVKGVCTEAGMYALRERRVHVTQEDFEMAVAKVMQKDSEKNMSIKKLWKCFFLVPILCSTVCFQLKPSDVYYMGAWLIKPTRFNRRIITNSYHLQIFKPTIVLANGECHN.

Residue 185–192 (GPPGTGKT) participates in ATP binding.

The protein belongs to the AAA ATPase family.

It localises to the cytoplasm. The protein localises to the nucleus. In terms of biological role, the 26S proteasome is involved in the ATP-dependent degradation of ubiquitinated proteins. The regulatory (or ATPase) complex confers ATP dependency and substrate specificity to the 26S complex. This Xenopus laevis (African clawed frog) protein is 26S proteasome regulatory subunit 8 (psmc5).